Reading from the N-terminus, the 365-residue chain is Tubulin-like protein CetZ (365 aa).

Residues 10 to 14 (QCGTK), 103 to 105 (GTG), Glu136, Asn163, and Asn181 contribute to the GTP site.

The protein belongs to the CetZ family.

The protein resides in the cytoplasm. Functionally, involved in cell shape control. The chain is Tubulin-like protein CetZ from Pyrococcus horikoshii (strain ATCC 700860 / DSM 12428 / JCM 9974 / NBRC 100139 / OT-3).